Reading from the N-terminus, the 215-residue chain is Thiamine-phosphate synthase 1 (215 aa).

4-amino-2-methyl-5-(diphosphooxymethyl)pyrimidine is bound by residues 35 to 39 (QYRFE) and Asn67. Mg(2+) is bound by residues Asp68 and Asp87. Thr106 is a binding site for 4-amino-2-methyl-5-(diphosphooxymethyl)pyrimidine. A 2-[(2R,5Z)-2-carboxy-4-methylthiazol-5(2H)-ylidene]ethyl phosphate-binding site is contributed by 132 to 134 (TST). Lys135 lines the 4-amino-2-methyl-5-(diphosphooxymethyl)pyrimidine pocket. Gly162 lines the 2-[(2R,5Z)-2-carboxy-4-methylthiazol-5(2H)-ylidene]ethyl phosphate pocket.

The protein belongs to the thiamine-phosphate synthase family. Mg(2+) serves as cofactor.

It carries out the reaction 2-[(2R,5Z)-2-carboxy-4-methylthiazol-5(2H)-ylidene]ethyl phosphate + 4-amino-2-methyl-5-(diphosphooxymethyl)pyrimidine + 2 H(+) = thiamine phosphate + CO2 + diphosphate. The catalysed reaction is 2-(2-carboxy-4-methylthiazol-5-yl)ethyl phosphate + 4-amino-2-methyl-5-(diphosphooxymethyl)pyrimidine + 2 H(+) = thiamine phosphate + CO2 + diphosphate. The enzyme catalyses 4-methyl-5-(2-phosphooxyethyl)-thiazole + 4-amino-2-methyl-5-(diphosphooxymethyl)pyrimidine + H(+) = thiamine phosphate + diphosphate. The protein operates within cofactor biosynthesis; thiamine diphosphate biosynthesis; thiamine phosphate from 4-amino-2-methyl-5-diphosphomethylpyrimidine and 4-methyl-5-(2-phosphoethyl)-thiazole: step 1/1. Condenses 4-methyl-5-(beta-hydroxyethyl)thiazole monophosphate (THZ-P) and 2-methyl-4-amino-5-hydroxymethyl pyrimidine pyrophosphate (HMP-PP) to form thiamine monophosphate (TMP). This is Thiamine-phosphate synthase 1 from Aquifex aeolicus (strain VF5).